The sequence spans 414 residues: Protein PHLOEM PROTEIN 2-LIKE A10 (414 aa).

A run of 2 helical transmembrane segments spans residues 20 to 40 and 379 to 399; these read WLIF…VYHL and YVGA…LHII.

The protein localises to the membrane. The sequence is that of Protein PHLOEM PROTEIN 2-LIKE A10 (PP2A10) from Arabidopsis thaliana (Mouse-ear cress).